The primary structure comprises 783 residues: Flavin carrier protein 2 (783 aa).

An N-terminal signal peptide occupies residues 1–22 (MIFLNTFARCLLTCFVLCSGTA). Topologically, residues 23 to 182 (RSSDTNDTTP…NGKTVQTKYA (160 aa)) are lumenal. 4 N-linked (GlcNAc...) asparagine glycosylation sites follow: asparagine 28, asparagine 65, asparagine 81, and asparagine 156. The helical transmembrane segment at 183 to 203 (AWPIAAISGVGVLTSGFVSVI) threads the bilayer. The Cytoplasmic segment spans residues 204–211 (GYSATAAH). A helical transmembrane segment spans residues 212–232 (IASNSISLFIYFQNLAITAMM). Topologically, residues 233 to 347 (GVSRVPPIAA…AYLANIELSN (115 aa)) are lumenal. N-linked (GlcNAc...) asparagine glycosylation occurs at asparagine 323. Residues 348 to 368 (FFLTGIVFFLFFLFVVVVSLI) traverse the membrane as a helical segment. The Cytoplasmic portion of the chain corresponds to 369-402 (FFKALLEVLTRARILKETSNFFQYRKNWGSIIKG). Residues 403–423 (TLFRLSIIAFPQVSLLAIWEF) form a helical membrane-spanning segment. Residues 424-430 (TQVNSPA) are Lumenal-facing. The helical transmembrane segment at 431 to 451 (IVVDAVVILLIITGLLVYGTI) threads the bilayer. Residues 452-492 (RVFIKGRESLRLYKNPAYLLYSDTYFLNKFGFLYVQFKADK) are Cytoplasmic-facing. A helical membrane pass occupies residues 493-513 (FWWLLPLLSYAFLRSLFVAVL). Residues 514 to 521 (QNQGKAQA) lie on the Lumenal side of the membrane. Residues 522–542 (MIIFVIELAYFVCLCWIRPYL) traverse the membrane as a helical segment. The Cytoplasmic portion of the chain corresponds to 543 to 547 (DKRTN). Residues 548 to 568 (VFNIAIHLVNLINAFFFLFFS) form a helical membrane-spanning segment. Topologically, residues 569 to 581 (NLFKQPAVVSSVM) are lumenal. A helical transmembrane segment spans residues 582-602 (AVILFVLNAVFALFLLLFTIV). The Cytoplasmic segment spans residues 603–783 (TCTLALLHRN…ENARNNNPYL (181 aa)). Residues 681–783 (RLFDDETSSS…ENARNNNPYL (103 aa)) are disordered. The segment covering 688–697 (SSSSFKQNSS) has biased composition (low complexity). 2 stretches are compositionally biased toward polar residues: residues 704-748 (VTEQ…TSSL) and 756-767 (YLGNSNKSYSHF). Low complexity predominate over residues 768–783 (NNNGSNENARNNNPYL).

It belongs to the transient receptor potential (TRP) ion channel family.

Its subcellular location is the endoplasmic reticulum membrane. May be responsible for the transport of FAD into the endoplasmic reticulum lumen, where it is required for oxidative protein folding. The sequence is that of Flavin carrier protein 2 (FLC2) from Saccharomyces cerevisiae (strain ATCC 204508 / S288c) (Baker's yeast).